The chain runs to 565 residues: Hemagglutinin (565 aa).

Positions 1-17 (MKANLLVLLCALAAADA) are cleaved as a signal peptide. Topologically, residues 18 to 528 (DTICIGYHAN…VKLESMGIYQ (511 aa)) are extracellular. 6 disulfide bridges follow: C21–C480, C59–C291, C72–C84, C107–C152, C295–C319, and C487–C491. N-linked (GlcNAc...) asparagine; by host glycosylation is found at N27, N28, and N40. N-linked (GlcNAc...) asparagine; by host glycans are attached at residues N285 and N303. Residue N497 is glycosylated (N-linked (GlcNAc...) asparagine; by host). A helical membrane pass occupies residues 529–549 (ILAIYSTVASSLVLLVSLGAI). Over 550–565 (SFWMCSNGSLQCRICI) the chain is Cytoplasmic. Residues C554, C561, and C564 are each lipidated (S-palmitoyl cysteine; by host).

The protein belongs to the influenza viruses hemagglutinin family. Homotrimer of disulfide-linked HA1-HA2. Interacts with human CACNA1C. Palmitoylated. In terms of processing, in natural infection, inactive HA is matured into HA1 and HA2 outside the cell by one or more trypsin-like, arginine-specific endoprotease secreted by the bronchial epithelial cells. One identified protease that may be involved in this process is secreted in lungs by club cells.

It localises to the virion membrane. The protein resides in the host apical cell membrane. Functionally, binds to sialic acid-containing receptors on the cell surface, bringing about the attachment of the virus particle to the cell. This attachment induces virion internalization either through clathrin-dependent endocytosis or through clathrin- and caveolin-independent pathway. Plays a major role in the determination of host range restriction and virulence. Class I viral fusion protein. Responsible for penetration of the virus into the cell cytoplasm by mediating the fusion of the membrane of the endocytosed virus particle with the endosomal membrane. Low pH in endosomes induces an irreversible conformational change in HA2, releasing the fusion hydrophobic peptide. Several trimers are required to form a competent fusion pore. The sequence is that of Hemagglutinin from Aves (Human).